The chain runs to 66 residues: M-poneratoxin-Dq3a (66 aa).

A signal peptide spans Met-1–Ala-23. Positions Glu-24–Ala-43 are excised as a propeptide.

The protein belongs to the non-disulfide-bridged peptide (NDBP) superfamily. Medium-length antimicrobial peptide (group 3) family. Ponericin-W subfamily. Expressed by the venom gland.

The protein localises to the secreted. The protein resides in the target cell membrane. Its function is as follows. May have antimicrobial properties by disrupting the integrity of the bacterial cell membrane. In addition, when tested in vitro on the parasite Trypanosoma cruzi (responsible of the Chagas disease), is able to potently reduce the number of the three forms (epimastigote, trypomastigote and amastigote) by inducing cell death through necrosis. In terms of biological role, may have antimicrobial properties by disrupting the integrity of the bacterial cell membrane. In addition, when tested in vitro on the parasite Trypanosoma cruzi (responsible of the Chagas disease), is able to moderately reduce the number of the forms epimastigote and trypomastigote. Its activity on the amastigote form has not been tested. May have antimicrobial properties by disrupting the integrity of the bacterial cell membrane. In addition, when tested in vitro on the parasite Trypanosoma cruzi (responsible of the Chagas disease), shows only a weak reduction of the number of the trypomastigote forms. Has no activity on the epimastigote forms. Its activity on the amastigote form has not been tested. The polypeptide is M-poneratoxin-Dq3a (Dinoponera quadriceps (South American ant)).